The primary structure comprises 190 residues: LIM domain-containing protein WLIM1 (190 aa).

Alanine 2 is modified (N-acetylalanine). Residues 8-68 (QKCMACDKTV…RPHFDQNFKR (61 aa)) form the LIM zinc-binding 1 domain. Residues 74-98 (KSFEGTPKIGKPDRPLEGERPAGTK) are disordered. Basic and acidic residues predominate over residues 83–95 (GKPDRPLEGERPA). In terms of domain architecture, LIM zinc-binding 2 spans 108 to 168 (EKCVGCDKTV…KHHHIQLIKE (61 aa)).

As to quaternary structure, interacts with F-actin. As to expression, expressed in roots, leaves, stems, flowers and siliques. Not detected in pollen.

Its subcellular location is the cytoplasm. The protein localises to the cytoskeleton. Its function is as follows. Binds to actin filaments and promotes cross-linking into thick bundles. Has an actin-stabilizing activity. The actin regulatory activities are not regulated by pH and [Ca(2+)]. In Arabidopsis thaliana (Mouse-ear cress), this protein is LIM domain-containing protein WLIM1.